The sequence spans 218 residues: Protein N-lysine methyltransferase METTL21A (218 aa).

S-adenosyl-L-methionine is bound by residues Trp47, 73–75, Asp94, Trp125, and Ala143; that span reads GAG.

It belongs to the methyltransferase superfamily. METTL21 family. As to quaternary structure, interacts with heat shock protein 70 family members; at least some of these proteins are methylation substrates.

It is found in the cytoplasm. It catalyses the reaction L-lysyl-[protein] + 3 S-adenosyl-L-methionine = N(6),N(6),N(6)-trimethyl-L-lysyl-[protein] + 3 S-adenosyl-L-homocysteine + 3 H(+). Its function is as follows. Protein-lysine methyltransferase that selectively trimethylates residues in heat shock protein 70 (HSP70) family members. Contributes to the in vivo trimethylation of Lys residues in HSPA1 and HSPA8. In vitro methylates 'Lys-561' in HSPA1, 'Lys-564' in HSPA2, 'Lys-585' in HSPA5, 'Lys-563' in HSPA6 and 'Lys-561' in HSPA8. In Homo sapiens (Human), this protein is Protein N-lysine methyltransferase METTL21A (METTL21A).